The chain runs to 81 residues: Putative membrane protein insertion efficiency factor (81 aa).

Belongs to the UPF0161 family.

The protein resides in the cell inner membrane. Its function is as follows. Could be involved in insertion of integral membrane proteins into the membrane. This is Putative membrane protein insertion efficiency factor from Pseudomonas savastanoi pv. phaseolicola (strain 1448A / Race 6) (Pseudomonas syringae pv. phaseolicola (strain 1448A / Race 6)).